Consider the following 113-residue polypeptide: Hydrogenase maturation factor HypA (113 aa).

His-2 lines the Ni(2+) pocket. Positions 73, 76, 89, and 92 each coordinate Zn(2+).

Belongs to the HypA/HybF family.

Functionally, involved in the maturation of [NiFe] hydrogenases. Required for nickel insertion into the metal center of the hydrogenase. The sequence is that of Hydrogenase maturation factor HypA from Chlorobaculum parvum (strain DSM 263 / NCIMB 8327) (Chlorobium vibrioforme subsp. thiosulfatophilum).